A 101-amino-acid chain; its full sequence is Large ribosomal subunit protein bL28 (101 aa).

This sequence belongs to the bacterial ribosomal protein bL28 family.

In Rhodopseudomonas palustris (strain BisB18), this protein is Large ribosomal subunit protein bL28.